We begin with the raw amino-acid sequence, 744 residues long: Prestin (744 aa).

The Cytoplasmic portion of the chain corresponds to 1 to 75 (MDHAEENEIL…PITKWLPAYK (75 aa)). The chain crosses the membrane as a helical span at residues 76 to 105 (FKEYVLGDLVSGISTGVLQLPQGLAFAMLA). At 106 to 108 (AVP) the chain is on the extracellular side. The helical transmembrane segment at 109–126 (PIFGLYSSFYPVIMYCFL) threads the bilayer. Over 127–137 (GTSRHISIGPF) the chain is Cytoplasmic. A helical transmembrane segment spans residues 138 to 151 (AVISLMIGGVAVRL). Over 152–168 (VPDDIVIPGGVNATNGT) the chain is Extracellular. Positions 158 to 168 (IPGGVNATNGT) match the Involved in motor function motif. N-linked (GlcNAc...) asparagine glycosylation is found at Asn163 and Asn166. A helical membrane pass occupies residues 169–196 (EARDALRVKVAMSVTLLSGIIQFCLGVC). At 197–206 (RFGFVAIYLT) the chain is on the cytoplasmic side. The helical transmembrane segment at 207–230 (EPLVRGFTTAAAVHVFTSMLKYLF) threads the bilayer. Topologically, residues 231-241 (GVKTKRYSGIF) are extracellular. The helical intramembrane region spans 242-253 (SVVYSTVAVLQN). The Extracellular portion of the chain corresponds to 254-258 (VKNLN). The chain crosses the membrane as a helical span at residues 259 to 282 (VCSLGVGLMVFGLLLGGKEFNERF). The Cytoplasmic segment spans residues 283 to 291 (KEKLPAPIP). The chain crosses the membrane as a helical span at residues 292-307 (LEFFAVVMGTGISAGF). The Extracellular portion of the chain corresponds to 308–332 (NLKESYNVDVVGTLPLGLLPPANPD). A helical membrane pass occupies residues 333 to 367 (TSLFHLVYVDAIAIAIVGFSVTISMAKTLANKHGY). At 368–370 (QVD) the chain is on the cytoplasmic side. The helical transmembrane segment at 371 to 388 (GNQELIALGLCNSIGSLF) threads the bilayer. Residues 389–396 (QTFSISCS) lie on the Extracellular side of the membrane. Residues 397-406 (LSRSLVQEGT) form a helical membrane-spanning segment. Ser398 contacts salicylate. Topologically, residues 407-410 (GGKT) are cytoplasmic. A helical membrane pass occupies residues 411–432 (QLAGCLASLMILLVILATGFLF). Topologically, residues 433–436 (ESLP) are extracellular. Residues 437-464 (QAVLSAIVIVNLKGMFMQFSDLPFFWRT) traverse the membrane as a helical segment. Ser465 is a topological domain (cytoplasmic). A helical transmembrane segment spans residues 466 to 481 (KIELTIWLTTFVSSLF). Topologically, residues 482-483 (LG) are extracellular. A helical transmembrane segment spans residues 484 to 504 (LDYGLITAVIIALLTVIYRTQ). Residues 505–718 (SPSYKVLGKL…AVLGSQLREA (214 aa)) are extended region for STAS domain. The Cytoplasmic segment spans residues 505-744 (SPSYKVLGKL…PNATPATPEA (240 aa)). In terms of domain architecture, STAS spans 525-713 (AYEEVKEIPG…HSIHDAVLGS (189 aa)). Positions 718 to 744 (ALAEQEASAPPSQEDLEPNATPATPEA) are disordered.

This sequence belongs to the SLC26A/SulP transporter (TC 2.A.53) family. In terms of assembly, homodimer. Interacts (via STAS domain) with CALM; this interaction is calcium-dependent and the STAS domain interacts with only one lobe of CALM which is an elongated conformation. Interacts with MYH1.

It is found in the lateral cell membrane. The catalysed reaction is 2 hydrogencarbonate(in) + chloride(out) = 2 hydrogencarbonate(out) + chloride(in). Its function is as follows. Voltage-sensitive motor protein that drives outer hair cell (OHC) electromotility (eM) and participates in sound amplification in the hearing organ. Converts changes in the transmembrane electric potential into mechanical displacements resulting in the coupling of its expansion to movement of a charged voltage sensor across the lipid membrane. The nature of the voltage sensor is not completely clear, and two models compete. In the first model, acts as an incomplete transporter where intracellular chloride anion acts as extrinsic voltage sensor that drives conformational change in the protein which is sufficient to produce a length change in the plane of the membrane and hence in the length of the OHC. The second model in which multiple charged amino acid residues are distributed at the intracellular and extracellular membrane interfaces that form an intrinsic voltage sensor, whose movement produces the non-linear capacitance (NLC). However, the effective voltage sensor may be the result of a hybrid voltage sensor, assembled from intrinsic charge (charged residues) and extrinsic charge (bound anion). Notably, binding of anions to the anion-binding pocket partially neutralizes the intrinsic positive charge rather than to form an electrically negative sensor, therefore remaining charge may serve as voltage sensor that, after depolarization, moves from down (expanded state) to up (contracted) conformation, which is accompanied by an eccentric contraction of the intermembrane cross-sectional area of the protein as well as a major increase in the hydrophobic thickness of the protein having as consequences the plasma membrane thickening and the cell contraction after membrane depolarization. The anion-binding pocket transits from the inward-open (Down) state, where it is exposed toward the intracellular solvent in the absence of anion, to the occluded (Up) state upon anion binding. Salicylate competes for the anion-binding site and inhibits the voltage-sensor movement, and therefore inhibits the charge transfer and electromotility by displacing Cl(-) from the anion-binding site and by preventing the structural transitions to the contracted state. In addition, can act as a weak Cl(-)/HCO3(-) antiporter across the cell membrane and so regulate the intracellular pH of the outer hair cells (OHCs), while firstly found as being unable to mediate electrogenic anion transport. Moreover, supports a role in cardiac mechanical amplification serving as an elastic element to enhance the actomyosin- based sarcomere contraction system. The polypeptide is Prestin (Homo sapiens (Human)).